The sequence spans 524 residues: MDLTLARTMEILRPLGLADGLRARGVPSTYPFTVRFSSGLGMKHSLSEWKLPSADQLRERIMSQNDGTMPLEPWLRVSGDVMEAFLKEKCEESHLVTLRFGWSVTQVIESATEVETRVRNPHTGGEKVIRSQYAVGCDGASSLVRKNMGIALDGGPIHSSVVLIHFKSRDLTRLHRQGRFWHTFFLLDPTISGDSVGGAIIAQDEVDTWTVHDFRAPGSKQSISCAEETIYRVLGAMGGPYPITIDEIIQQSTWTPSIALAKSYTGPLHRVFLAGDACHQTIPSGGYGMNMGIADVFDLGWKLAAMIQGWGGAQLVLSYEQERRPVAELMQHWGKVHAGKLMGLASAVTLNATIIDASDARGEEMRQKIHEYVQSNDAHNQCFGVEHGHQHHSDITVTSASSHPPFDPRSYTPTTHPGFRAPHVFLNDGSAIFDKFGKTLTLVEFIDAMPGPSSGGSFFRDTADEHHIPLRIASLVGEANAQQIWGARLVLVRPDHFVSWCGNDVGSKDEAKRVLLQAAGHICR.

The FAD site is built by E48 and R145.

This sequence belongs to the paxM FAD-dependent monooxygenase family.

Its pathway is secondary metabolite biosynthesis. In terms of biological role, FAD-dependent monooxygenase; part of the gene cluster that mediates the biosynthesis of oxopyrrolidines, polyketide-amino acid hybrid compounds with feature structures of tetramic acid. Does not seem to play a role in oxopyrrolidines A and B biosynthesis. May be involved in further modifications of these oxopyrrolidines. In Penicillium oxalicum (strain 114-2 / CGMCC 5302) (Penicillium decumbens), this protein is FAD-dependent monooxygenase opdD.